Here is a 384-residue protein sequence, read N- to C-terminus: Dual specificity protein phosphatase 5 (384 aa).

The 123-residue stretch at Ala-19–Val-141 folds into the Rhodanese domain. Residues Arg-53 to Arg-74 carry the Nuclear localization signal motif. The region spanning Gly-178–Pro-319 is the Tyrosine-protein phosphatase domain. Cys-263 serves as the catalytic Phosphocysteine intermediate.

The protein belongs to the protein-tyrosine phosphatase family. Non-receptor class dual specificity subfamily.

Its subcellular location is the nucleus. The enzyme catalyses O-phospho-L-tyrosyl-[protein] + H2O = L-tyrosyl-[protein] + phosphate. The catalysed reaction is O-phospho-L-seryl-[protein] + H2O = L-seryl-[protein] + phosphate. It carries out the reaction O-phospho-L-threonyl-[protein] + H2O = L-threonyl-[protein] + phosphate. Its function is as follows. Dual specificity protein phosphatase; active with phosphotyrosine, phosphoserine and phosphothreonine residues. The highest relative activity is toward ERK1. This chain is Dual specificity protein phosphatase 5 (Dusp5), found in Rattus norvegicus (Rat).